We begin with the raw amino-acid sequence, 746 residues long: Exostosin-1 (746 aa).

Residues 1-7 lie on the Cytoplasmic side of the membrane; that stretch reads MQAKKRY. A helical; Signal-anchor for type II membrane protein membrane pass occupies residues 8–28; sequence FILLSAGSCLALLFYFGGVQF. The Lumenal portion of the chain corresponds to 29-746; sequence RASRSHSRRE…RKKYRDIERL (718 aa). An N-linked (GlcNAc...) asparagine glycan is attached at Asn89. 2 disulfides stabilise this stretch: Cys98–Cys103 and Cys109–Cys152. Residues Leu166 and Tyr203 each coordinate a protein. UDP-binding residues include Lys267, Lys269, Tyr271, and Arg280. Cys298 and Cys312 are joined by a disulfide. A protein is bound at residue His300. UDP is bound by residues Tyr319 and Tyr324. The N-linked (GlcNAc...) asparagine glycan is linked to Asn330. 2 cysteine pairs are disulfide-bonded: Cys334–Cys355 and Cys652–Cys704. 2 residues coordinate UDP: Arg346 and Glu349.

This sequence belongs to the glycosyltransferase 47 family. In terms of assembly, part of the heparan sulfate polymerase, a dimeric complex composed of EXT1 and EXT2. Could also form homooligomeric complexes. Interacts with NDST1. In terms of processing, N-glycosylated.

It localises to the golgi apparatus membrane. The protein resides in the golgi apparatus. The protein localises to the cis-Golgi network membrane. Its subcellular location is the endoplasmic reticulum membrane. It carries out the reaction 3-O-{alpha-D-GlcNAc-[(1-&gt;4)-beta-D-GlcA-(1-&gt;4)-alpha-D-GlcNAc](n)-(1-&gt;4)-beta-D-GlcA-(1-&gt;3)-beta-D-Gal-(1-&gt;3)-beta-D-Gal-(1-&gt;4)-beta-D-Xyl}-L-seryl-[protein] + UDP-alpha-D-glucuronate = 3-O-{[(1-&gt;4)-beta-D-GlcA-(1-&gt;4)-alpha-D-GlcNAc](n+1)-(1-&gt;4)-beta-D-GlcA-(1-&gt;3)-beta-D-Gal-(1-&gt;3)-beta-D-Gal-(1-&gt;4)-beta-D-Xyl}-L-seryl-[protein] + UDP + H(+). It participates in protein modification; protein glycosylation. Its function is as follows. Glycosyltransferase forming with EXT2 the heterodimeric heparan sulfate polymerase which catalyzes the elongation of the heparan sulfate glycan backbone. Glycan backbone extension consists in the alternating transfer of (1-&gt;4)-beta-D-GlcA and (1-&gt;4)-alpha-D-GlcNAc residues from their respective UDP-sugar donors. Both EXT1 and EXT2 are required for the full activity of the polymerase since EXT1 bears the N-acetylglucosaminyl-proteoglycan 4-beta-glucuronosyltransferase activity within the complex while EXT2 carries the glucuronosyl-N-acetylglucosaminyl-proteoglycan 4-alpha-N-acetylglucosaminyltransferase activity. Heparan sulfate proteoglycans are ubiquitous components of the extracellular matrix and play an important role in tissue homeostasis and signaling. This is Exostosin-1 from Mus musculus (Mouse).